The sequence spans 286 residues: tRNA (guanine-N(7)-)-methyltransferase (286 aa).

Phosphoserine is present on residues S7 and S59. Residues G103, 126-127, 161-162, and C181 contribute to the S-adenosyl-L-methionine site; these read EI and NA. D184 is an active-site residue. An S-adenosyl-L-methionine-binding site is contributed by 259–261; sequence TEE.

It belongs to the class I-like SAM-binding methyltransferase superfamily. TrmB family. In terms of assembly, forms a complex with TRM82.

It localises to the nucleus. The enzyme catalyses guanosine(46) in tRNA + S-adenosyl-L-methionine = N(7)-methylguanosine(46) in tRNA + S-adenosyl-L-homocysteine. Its pathway is tRNA modification; N(7)-methylguanine-tRNA biosynthesis. Functionally, methyltransferase that catalyzes the formation of N(7)-methylguanine at position 46 (m7G46) in tRNA, a modification required to maintain stability of tRNAs; its absence resulting in tRNA decay. Both the D-stem and T-stem structures of tRNAs are required for efficient methyltransferase activity. The polypeptide is tRNA (guanine-N(7)-)-methyltransferase (Saccharomyces cerevisiae (strain YJM789) (Baker's yeast)).